The chain runs to 563 residues: Probable CoA ligase CCL11 (563 aa).

Residues 195–203 (TSGTTSSPK), 328–333 (HGYGMT), Asp426, 438–441 (IKDR), and Lys534 each bind ATP. The SBD1 stretch occupies residues 263-328 (DGEIIFNLIR…TESLGFVISH (66 aa)). The interval 329-405 (GYGMTEMLGV…LKGSSIMLGY (77 aa)) is SBD2.

The protein belongs to the ATP-dependent AMP-binding enzyme family.

It localises to the cytoplasm. It is found in the cytosol. The chain is Probable CoA ligase CCL11 from Humulus lupulus (European hop).